The sequence spans 627 residues: tRNA uridine 5-carboxymethylaminomethyl modification enzyme MnmG (627 aa).

Residues 16–21 (GAGHAG), Val-128, and Ser-183 each bind FAD. NAD(+) is bound at residue 277 to 291 (GPRYCPSIEDKIVRF). Gln-374 provides a ligand contact to FAD.

This sequence belongs to the MnmG family. As to quaternary structure, homodimer. Heterotetramer of two MnmE and two MnmG subunits. FAD is required as a cofactor.

It localises to the cytoplasm. NAD-binding protein involved in the addition of a carboxymethylaminomethyl (cmnm) group at the wobble position (U34) of certain tRNAs, forming tRNA-cmnm(5)s(2)U34. This chain is tRNA uridine 5-carboxymethylaminomethyl modification enzyme MnmG, found in Finegoldia magna (strain ATCC 29328 / DSM 20472 / WAL 2508) (Peptostreptococcus magnus).